A 138-amino-acid polypeptide reads, in one-letter code: Large ribosomal subunit protein uL16 (138 aa).

The span at 1–13 (MLQPKRRKYRKEQ) shows a compositional bias: basic residues. The disordered stretch occupies residues 1-20 (MLQPKRRKYRKEQKGRNTGI).

It belongs to the universal ribosomal protein uL16 family. Part of the 50S ribosomal subunit.

Functionally, binds 23S rRNA and is also seen to make contacts with the A and possibly P site tRNAs. The protein is Large ribosomal subunit protein uL16 of Paraburkholderia phytofirmans (strain DSM 17436 / LMG 22146 / PsJN) (Burkholderia phytofirmans).